Here is a 908-residue protein sequence, read N- to C-terminus: 26S proteasome non-ATPase regulatory subunit 2 (908 aa).

M1 is subject to N-acetylmethionine. The tract at residues 1-51 (MEEGGRDKTPVQSQQPSATAPSGADEKSSGKERRDAGEKDKEQELSEEDKQ) is disordered. T9 bears the Phosphothreonine mark. Positions 10–20 (PVQSQQPSATA) are enriched in polar residues. Residues 24-51 (ADEKSSGKERRDAGEKDKEQELSEEDKQ) are compositionally biased toward basic and acidic residues. 2 positions are modified to phosphoserine: S29 and S147. Position 194 is a phosphotyrosine (Y194). Phosphoserine occurs at positions 361 and 363. 5 PC repeats span residues 409–442 (SAAASLGMILLWDVDGGLTQIDKYLYSSEDYIKS), 443–479 (GALLACGIVNSGVRNECDPALALLSDYVLHNSNTMRL), 480–514 (GSIFGLGLAYAGSNREDVLTLLLPVMGDSKSSMEV), 517–551 (VTALACGMIAVGSCNGDVTSTILQTIMEKSETELK), and 560–589 (LGLGLNHLGKGEAIEAILAALEVVSEPFRS). K551 carries the post-translational modification N6-acetyllysine. Positions 623–643 (KEKEEDKDKKEKKDKDKKEAP) are enriched in basic and acidic residues. The tract at residues 623-645 (KEKEEDKDKKEKKDKDKKEAPAD) is disordered. PC repeat units follow at residues 692–723 (LALALISVSNPRLNILDTLSKFSHDADPEVSY) and 742–757 (AAMLRQLAQYHAKDPN). The interval 708–903 (DTLSKFSHDA…LEGFVILRKN (196 aa)) is required for interaction with UBLCP1.

It belongs to the proteasome subunit S2 family. Component of the 19S proteasome regulatory particle complex. The 26S proteasome consists of a 20S core particle (CP) and two 19S regulatory subunits (RP). The regulatory particle is made of a lid composed of 9 subunits, a base containing 6 ATPases and few additional components including PSMD2. Interacts with RPGRIP1L. Interacts with CRY1 in a KDM8-dependent manner. Interacts (via C-terminus) with phosphatase UBLCP1 (via ubiquitin-like domain); the interaction recruits UBLCP1 to the 19S regulatory particle where it dephosphorylates 19S subunit PSMC2/RPT1 which impairs PSMC2 ATPase activity and disrupts 26S proteasome assembly.

Functionally, component of the 26S proteasome, a multiprotein complex involved in the ATP-dependent degradation of ubiquitinated proteins. This complex plays a key role in the maintenance of protein homeostasis by removing misfolded or damaged proteins, which could impair cellular functions, and by removing proteins whose functions are no longer required. Therefore, the proteasome participates in numerous cellular processes, including cell cycle progression, apoptosis, or DNA damage repair. Its function is as follows. Binds to the intracellular domain of tumor necrosis factor type 1 receptor. The binding domain of TRAP1 and TRAP2 resides outside the death domain of TNFR1. The sequence is that of 26S proteasome non-ATPase regulatory subunit 2 (Psmd2) from Rattus norvegicus (Rat).